The sequence spans 471 residues: Argininosuccinate lyase (471 aa).

The protein belongs to the lyase 1 family. Argininosuccinate lyase subfamily.

It is found in the cytoplasm. It catalyses the reaction 2-(N(omega)-L-arginino)succinate = fumarate + L-arginine. It participates in amino-acid biosynthesis; L-arginine biosynthesis; L-arginine from L-ornithine and carbamoyl phosphate: step 3/3. This Paramagnetospirillum magneticum (strain ATCC 700264 / AMB-1) (Magnetospirillum magneticum) protein is Argininosuccinate lyase.